Here is a 443-residue protein sequence, read N- to C-terminus: MDFPCLWLGLLLPLVAALDFNYHRQEGMEAFLKTVAQNYSSVTHLHSIGKSVKGRNLWVLVVGRFPKEHRIGIPEFKYVANMHGDETVGRELLLHLIDYLVTSDGKDPEITNLINSTRIHIMPSMNPDGFEAVKKPDCYYSIGRENYNQYDLNRNFPDAFEYNNVSRQPETVAVMKWLKTETFVLSANLHGGALVASYPFDNGVQATGALYSRSLTPDDDVFQYLAHTYASRNPNMKKGDECKNKMNFPNGVTNGYSWYPLQGGMQDYNYIWAQCFEITLELSCCKYPREEKLPSFWNNNKASLIEYIKQVHLGVKGQVFDQNGNPLPNVIVEVQDRKHICPYRTNKYGEYYLLLLPGSYIINVTVPGHDPHITKVIIPEKSQNFSALKKDILLPFQGQLDSIPVSNPSCPMIPLYRNLPDHSAATKPSLFLFLVSLLHIFFK.

Positions 1–17 are cleaved as a signal peptide; it reads MDFPCLWLGLLLPLVAA. The Peptidase M14 domain occupies 21 to 311; the sequence is NYHRQEGMEA…ASLIEYIKQV (291 aa). Asn38 is a glycosylation site (N-linked (GlcNAc...) asparagine). Zn(2+) is bound by residues His83 and Glu86. N-linked (GlcNAc...) asparagine glycans are attached at residues Asn115 and Asn164. 3 cysteine pairs are disulfide-bonded: Cys138/Cys285, Cys242/Cys284, and Cys341/Cys410. Position 190 (His190) interacts with Zn(2+). Glu281 acts as the Proton donor/acceptor in catalysis. Asn363 and Asn384 each carry an N-linked (GlcNAc...) asparagine glycan. A lipid anchor (GPI-anchor amidated serine) is attached at Ser423. Residues 424–443 constitute a propeptide, removed in mature form; sequence AATKPSLFLFLVSLLHIFFK.

The protein belongs to the peptidase M14 family. Zn(2+) is required as a cofactor.

The protein resides in the cell membrane. The enzyme catalyses Cleavage of C-terminal arginine or lysine residues from polypeptides.. Its activity is regulated as follows. Inhibited by O-phenanthroline and MGTA and activated by cobalt. Functionally, specifically removes C-terminal basic residues (Arg or Lys) from peptides and proteins. It is believed to play important roles in the control of peptide hormone and growth factor activity at the cell surface, and in the membrane-localized degradation of extracellular proteins. The polypeptide is Carboxypeptidase M (CPM) (Homo sapiens (Human)).